The following is a 734-amino-acid chain: Translation initiation factor IF-2 (734 aa).

The interval 39–110 is disordered; sequence SKFAPRSSFT…TGKPETKKRE (72 aa). Basic and acidic residues predominate over residues 82–110; it reads DYEKRKLAEQRATRRLKGDTGKPETKKRE. The tr-type G domain occupies 238 to 405; that stretch reads NRPPIVTVMG…SIVLQAEILD (168 aa). The segment at 247 to 254 is G1; the sequence is GHVDHGKT. A GTP-binding site is contributed by 247–254; that stretch reads GHVDHGKT. The interval 272–276 is G2; it reads GITQH. The segment at 293 to 296 is G3; sequence DTPG. GTP contacts are provided by residues 293-297 and 347-350; these read DTPGH and NKCD. The tract at residues 347–350 is G4; that stretch reads NKCD. The G5 stretch occupies residues 383-385; it reads SAK.

Belongs to the TRAFAC class translation factor GTPase superfamily. Classic translation factor GTPase family. IF-2 subfamily.

The protein localises to the cytoplasm. Functionally, one of the essential components for the initiation of protein synthesis. Protects formylmethionyl-tRNA from spontaneous hydrolysis and promotes its binding to the 30S ribosomal subunits. Also involved in the hydrolysis of GTP during the formation of the 70S ribosomal complex. The protein is Translation initiation factor IF-2 of Pelagibacter ubique (strain HTCC1062).